The primary structure comprises 74 residues: MNATIFALLLLLNLAMYNAAEQSSETDMDDTLLIPENYRKGCFKEGHSCPKTAPCCRPLVCKGPSPNTKKCTRP.

Positions 1-19 (MNATIFALLLLLNLAMYNA) are cleaved as a signal peptide. Positions 20–39 (AEQSSETDMDDTLLIPENYR) are excised as a propeptide. Disulfide bonds link Cys42–Cys56, Cys49–Cys61, and Cys55–Cys71.

Belongs to the neurotoxin 36 family. 01 subfamily. As to expression, expressed by the venom gland.

The protein resides in the secreted. Functionally, probable ion channel inhibitor. This is U5-theraphotoxin-Cg1a from Chilobrachys guangxiensis (Chinese earth tiger tarantula).